The primary structure comprises 240 residues: Glycerol uptake facilitator protein 3 (240 aa).

2 helical membrane passes run 11–31 and 41–61; these read LGEFLGTFILILLGDGVVAGV and AGWVAITLGWGFAVTMGVYAS. The short motif at 70 to 72 is the NPA 1 element; it reads NPA. The next 3 helical transmembrane spans lie at 88 to 108, 137 to 157, and 162 to 182; these read VIPYSAAQIAGGVIGGLVVWL, FWNFISEVIGTFVLVFGLLAF, and FTAGLNPIVVGILIIAIGLSL. The NPA 2 motif lies at 191-193; sequence NPA. A helical membrane pass occupies residues 219-239; the sequence is WVPIAGPLVGGALGALLFNVL.

The protein belongs to the MIP/aquaporin (TC 1.A.8) family.

The protein localises to the cell membrane. In terms of biological role, transporter that facilitates the transmembrane diffusion of water, dihydroxyacetone, glycerol and H(2)O(2). Is not permeable to urea and D/L-lactic acid. The chain is Glycerol uptake facilitator protein 3 from Lactiplantibacillus plantarum (strain ATCC BAA-793 / NCIMB 8826 / WCFS1) (Lactobacillus plantarum).